The sequence spans 118 residues: MPRVKRGNVARKRRKKILKLAKGFRGAQSRLFKVANQRVMQALRNAYRDRRKRKRDFRRLWITRINAAARQQGMTYSQLICNMKRANIAINRKMLAQLAVLNPEAFAKVLELASLAKK.

Belongs to the bacterial ribosomal protein bL20 family.

Binds directly to 23S ribosomal RNA and is necessary for the in vitro assembly process of the 50S ribosomal subunit. It is not involved in the protein synthesizing functions of that subunit. This Trichodesmium erythraeum (strain IMS101) protein is Large ribosomal subunit protein bL20.